Here is a 148-residue protein sequence, read N- to C-terminus: MGRLVFVSFGLLVVFLSLTGTGAGFCCPLGWSSYEGHCYKVFKQDMTWEDAEKFCTQQHEGSHLVSLQSSEEVDFVISMTAPMLKLGLVWIGLSNIWNECTLEWTNGNKVDYKAWSAEPECIVSKSTDKHWFSRPCSKTHKVVCKFQA.

Residues 1-23 (MGRLVFVSFGLLVVFLSLTGTGA) form the signal peptide. Intrachain disulfides connect Cys-27–Cys-38, Cys-55–Cys-144, and Cys-121–Cys-136. One can recognise a C-type lectin domain in the interval 34–145 (YEGHCYKVFK…CSKTHKVVCK (112 aa)).

Belongs to the snaclec family. In terms of assembly, heterodimer; disulfide-linked. Expressed by the venom gland.

The protein resides in the secreted. Its function is as follows. Interferes with one step of hemostasis (modulation of platelet aggregation, or coagulation cascade, for example). In Crotalus durissus terrificus (South American rattlesnake), this protein is Snaclec crotocetin.